The following is a 121-amino-acid chain: Large ribosomal subunit protein uL14 (121 aa).

Belongs to the universal ribosomal protein uL14 family. As to quaternary structure, part of the 50S ribosomal subunit. Forms a cluster with proteins L3 and L19. In the 70S ribosome, L14 and L19 interact and together make contacts with the 16S rRNA in bridges B5 and B8.

Functionally, binds to 23S rRNA. Forms part of two intersubunit bridges in the 70S ribosome. The chain is Large ribosomal subunit protein uL14 from Aquifex pyrophilus.